The chain runs to 594 residues: CRISPR-associated DNA-binding protein Cas12m (594 aa).

The tract at residues 1–85 (MSRLEARTRY…EKVRQVMVFE (85 aa)) is recognition domain (REC1-N). The interval 86-153 (SETTKKIKEL…ERSFIFEARK (68 aa)) is recognition domain (REC2). The recognition domain (REC1-C) stretch occupies residues 154–211 (QELAQLEKERWAVVKELGKGSGLYWCNLEDVVNSYDIGRKKAKAAGGEMRFHRWDGTG). The wedge domain (WED) stretch occupies residues 212-314 (KVTVRFQKGL…RYKLNLVLEI (103 aa)). Positions 315 to 329 (LGENTNRILPALEGT) are linker. Residues 330–540 (AAIDLGWRTV…KNHVEFTYVP (211 aa)) are ruvC-I. The target nucleic-acid binding (TNB) stretch occupies residues 541-575 (AENTTITCHKCGHKEKFDAAAQIIHTCSTCGELWD). 4 residues coordinate Zn(2+): cysteine 548, cysteine 551, cysteine 567, and cysteine 570. A ruvC-II region spans residues 576–594 (QDYNAAKNLLAFSQKGGVK). Aspartate 577 lines the Mg(2+) pocket.

Belongs to the CRISPR-associated DNA-binding protein Cas12m family. Mg(2+) is required as a cofactor. The cofactor is Zn(2+).

In terms of biological role, CRISPR (clustered regularly interspaced short palindromic repeat), is an adaptive immune system that provides protection against mobile genetic elements (viruses, transposable elements and conjugative plasmids). CRISPR clusters contain sequences complementary to antecedent mobile elements and target invading nucleic acids. CRISPR clusters are transcribed and processed into CRISPR RNA (crRNA). Recognizes a short motif in the CRISPR repeat sequences (the 5' PAM or protospacer adjacent motif, 5'-C/TCN-3' in this organism) to help distinguish self versus nonself, as targets within the bacterial CRISPR locus do not have PAMs. Upon expression in E.coli as a CRISPR locus inhibits plasmid propagation when targeted to regions essential for plasmid propagation (replication origin but not a selectable marker), probably by inhibiting transcription. Cas12m-crRNA binds DNA in a PAM-dependent, crRNA-guided fashion. Upon expression in E.coli as a CRISPR region preferentially binds to its associated crRNA. Probably required for pre-crRNA processing to mature crRNA. The protein is CRISPR-associated DNA-binding protein Cas12m of Thermanaerosceptrum fracticalcis.